Here is a 400-residue protein sequence, read N- to C-terminus: F-box/kelch-repeat protein At4g19870 (400 aa).

The span at 1–10 (MKRQAKPPEK) shows a compositional bias: basic and acidic residues. A disordered region spans residues 1-33 (MKRQAKPPEKKTKRTTNASSPTPSSSSPSLSSL). A compositionally biased stretch (low complexity) spans 19–33 (SSPTPSSSSPSLSSL). The F-box domain maps to 27-73 (SPSLSSLPDEIVENCLARISRSYYPTLSIVSKSFRSIISSTELYVAR). Kelch repeat units lie at residues 146-192 (EIYV…LYDG), 194-240 (IYVI…RIAE), and 242-284 (EGKI…SVLY).

The sequence is that of F-box/kelch-repeat protein At4g19870 from Arabidopsis thaliana (Mouse-ear cress).